A 503-amino-acid chain; its full sequence is MDYLILMICIVVSGLLLYSSRTSKMKLPPGPPGLPIVGNLFDLGSLPHRSLAKLAKLHGPVMCLRMGRLRVVVISSDSAAKEVLQTSDTLFCNRFVYDSLTASQHHTFSMALLPPTALWKSLRKISASQLFTNARMNASQHLRRKQLEDLLSYVESCSRSGTAINIAQAAFNTSVNLLSKTFFSVDLIDPSSSNSVEFKEMVWQIMLESGTPNLADYFPVLRRIDPQGNRRRMKIQFEKILDLFNTMIRQRLDEKGGCFDEINDTLDALLKINQDNSEELDLSVIPHLLLDLFVGGSESTSSTVEWAMALLFSNPEKMKKAKEELETVVGKGIAVKEEDTGRLPYLQAAIKETFRMHPPTPFLIPRKTDSDVDLCGFTVQKGSQVIVNAWAIGRDPSLWENADTFEPERFLGMEIDVKGRNFELIPFGAGRRICPGLPIAMRMLTLMVANLINCFEWRLEGGAAPETLDMSDKIGFTLQRAHPFRVIPTSIIQGCDVSTALNN.

Residues 7-23 (MICIVVSGLLLYSSRTS) traverse the membrane as a helical segment. Residue serine 471 coordinates heme.

Belongs to the cytochrome P450 family. The cofactor is heme.

It localises to the membrane. The catalysed reaction is (5S,9S,10S)-drim-7-en-11-ol + reduced [NADPH--hemoprotein reductase] + O2 = (5S,10S)-(9R)-7-drimene-11,12-diol + oxidized [NADPH--hemoprotein reductase] + H2O + H(+). Catalyzes the conversion of drimenol to drimendiol, a precursor of the sesquiterpenoid polygodial. Polygodial has been shown to be an antifeedant for a number of herbivorous insects. The chain is Drimenol monooxygenase from Persicaria hydropiper (Marshpepper knotweed).